Here is a 220-residue protein sequence, read N- to C-terminus: Deoxyribose-phosphate aldolase (220 aa).

Asp89 (proton donor/acceptor) is an active-site residue. Residue Lys151 is the Schiff-base intermediate with acetaldehyde of the active site. The active-site Proton donor/acceptor is Lys180.

This sequence belongs to the DeoC/FbaB aldolase family. DeoC type 1 subfamily. As to quaternary structure, homotetramer, in solution and in the crystal structure.

It is found in the cytoplasm. It catalyses the reaction 2-deoxy-D-ribose 5-phosphate = D-glyceraldehyde 3-phosphate + acetaldehyde. The protein operates within carbohydrate degradation; 2-deoxy-D-ribose 1-phosphate degradation; D-glyceraldehyde 3-phosphate and acetaldehyde from 2-deoxy-alpha-D-ribose 1-phosphate: step 2/2. Functionally, catalyzes a reversible aldol reaction between acetaldehyde and D-glyceraldehyde 3-phosphate to generate 2-deoxy-D-ribose 5-phosphate. The chain is Deoxyribose-phosphate aldolase from Thermus thermophilus (strain ATCC 27634 / DSM 579 / HB8).